Reading from the N-terminus, the 179-residue chain is NADH-quinone oxidoreductase subunit I (179 aa).

4Fe-4S ferredoxin-type domains are found at residues 49–79 (LTRD…LQKG) and 89–118 (EFFR…LTPD). Cys-59, Cys-62, Cys-65, Cys-69, Cys-98, Cys-101, Cys-104, and Cys-108 together coordinate [4Fe-4S] cluster.

Belongs to the complex I 23 kDa subunit family. As to quaternary structure, NDH-1 is composed of 14 different subunits. Subunits NuoA, H, J, K, L, M, N constitute the membrane sector of the complex. [4Fe-4S] cluster is required as a cofactor.

The protein resides in the cell inner membrane. The catalysed reaction is a quinone + NADH + 5 H(+)(in) = a quinol + NAD(+) + 4 H(+)(out). Its function is as follows. NDH-1 shuttles electrons from NADH, via FMN and iron-sulfur (Fe-S) centers, to quinones in the respiratory chain. The immediate electron acceptor for the enzyme in this species is believed to be ubiquinone. Couples the redox reaction to proton translocation (for every two electrons transferred, four hydrogen ions are translocated across the cytoplasmic membrane), and thus conserves the redox energy in a proton gradient. This is NADH-quinone oxidoreductase subunit I from Chromohalobacter salexigens (strain ATCC BAA-138 / DSM 3043 / CIP 106854 / NCIMB 13768 / 1H11).